The primary structure comprises 171 residues: Ribosome maturation factor RimP (171 aa).

The protein belongs to the RimP family.

Its subcellular location is the cytoplasm. Its function is as follows. Required for maturation of 30S ribosomal subunits. The protein is Ribosome maturation factor RimP of Anaeromyxobacter sp. (strain Fw109-5).